A 395-amino-acid polypeptide reads, in one-letter code: Synaptotagmin-8 (395 aa).

Residues 1 to 44 (MQADRSMKMGHALNPFSTSAPLDATAGPSLIPDLITRIPWPRWT) lie on the Extracellular side of the membrane. A helical; Signal-anchor for type III membrane protein membrane pass occupies residues 45–65 (LFIAILAAGVLLVSCLLCVIC). At 66-395 (CYCHRHRHRK…PRLPLLRPRS (330 aa)) the chain is on the cytoplasmic side. C2 domains lie at 113–229 (QWGR…ESWY) and 241–370 (QMGE…AQWH).

This sequence belongs to the synaptotagmin family. Homodimer or homooligomer. Homodimerization and homooligomerization do not depend on Ca(2+). Interacts with SYNCRIP isoform 2 C-terminus. Binds inositol 1,3,4,5-tetrakisphosphate (IP4). Binds to AP2 in a Ca(2+)-independent manner. Interacts with STX1A, STX1B and STX2; the interaction is Ca(2+)-dependent. In terms of tissue distribution, ubiquitous. Detected in testis and brain. Expressed in primary neurons, neuroendocrine and endocrine cells.

Its subcellular location is the cytoplasm. The protein localises to the cell membrane. The protein resides in the cytoplasmic vesicle. It is found in the secretory vesicle. It localises to the acrosome. Functionally, involved in the trafficking and exocytosis of secretory vesicles in non-neuronal tissues. Mediates Ca(2+)-regulation of exocytosis acrosomal reaction in sperm. May mediate Ca(2+)-regulation of exocytosis in insulin secreted cells. This is Synaptotagmin-8 (Syt8) from Mus musculus (Mouse).